The chain runs to 115 residues: UPF0597 protein NTHI1023 (115 aa).

The protein belongs to the UPF0597 family.

The polypeptide is UPF0597 protein NTHI1023 (Haemophilus influenzae (strain 86-028NP)).